We begin with the raw amino-acid sequence, 396 residues long: Small ribosomal subunit protein uS9m (396 aa).

The interval 374–396 (PRVRERKKPGQEGARRKFTWKKR) is disordered.

This sequence belongs to the universal ribosomal protein uS9 family. In terms of assembly, component of the mitochondrial ribosome small subunit (28S) which comprises a 12S rRNA and about 30 distinct proteins.

It is found in the mitochondrion. The polypeptide is Small ribosomal subunit protein uS9m (MRPS9) (Bos taurus (Bovine)).